The sequence spans 512 residues: GMP synthase [glutamine-hydrolyzing] (512 aa).

Residues 6–195 form the Glutamine amidotransferase type-1 domain; that stretch reads KIIILDFGSQ…VFNICGCQPK (190 aa). Cys-83 acts as the Nucleophile in catalysis. Residues His-169 and Glu-171 contribute to the active site. The GMPS ATP-PPase domain maps to 196 to 387; sequence WKITEFISAA…LGIDFKFVYK (192 aa). Residue 223–229 coordinates ATP; sequence SGGVDSS.

As to quaternary structure, homodimer.

The catalysed reaction is XMP + L-glutamine + ATP + H2O = GMP + L-glutamate + AMP + diphosphate + 2 H(+). Its pathway is purine metabolism; GMP biosynthesis; GMP from XMP (L-Gln route): step 1/1. Its function is as follows. Catalyzes the synthesis of GMP from XMP. The protein is GMP synthase [glutamine-hydrolyzing] of Spiroplasma kunkelii.